The following is a 230-amino-acid chain: Protein GrpE (230 aa).

Disordered regions lie at residues 1 to 28 and 209 to 230; these read MADEKNKPENPDLDQRDINNPRDREALK and GVSKGGPKVSAENGASTSEDNA. A compositionally biased stretch (polar residues) spans 221–230; sequence NGASTSEDNA.

The protein belongs to the GrpE family. As to quaternary structure, homodimer.

It is found in the cytoplasm. In terms of biological role, participates actively in the response to hyperosmotic and heat shock by preventing the aggregation of stress-denatured proteins, in association with DnaK and GrpE. It is the nucleotide exchange factor for DnaK and may function as a thermosensor. Unfolded proteins bind initially to DnaJ; upon interaction with the DnaJ-bound protein, DnaK hydrolyzes its bound ATP, resulting in the formation of a stable complex. GrpE releases ADP from DnaK; ATP binding to DnaK triggers the release of the substrate protein, thus completing the reaction cycle. Several rounds of ATP-dependent interactions between DnaJ, DnaK and GrpE are required for fully efficient folding. The polypeptide is Protein GrpE (Brucella ovis (strain ATCC 25840 / 63/290 / NCTC 10512)).